Consider the following 175-residue polypeptide: MYSALVRACAVIAFLILSPNCARALQDHAKDNGDIFIINYDSFDGDVDDISTTTSAPREADYVDFDEVNRNCNASFITSMTNVLQFNNTGDLPDDKDKVTSMCYFHCFFEKSGLMTDYKLNTDLVRKYVWPATGDSVEACEAEGKDETNACMRGYAIVKCVFTRALTDARNKPTV.

The N-terminal stretch at 1 to 24 is a signal peptide; that stretch reads MYSALVRACAVIAFLILSPNCARA. 2 disulfide bridges follow: Cys-103–Cys-151 and Cys-140–Cys-160.

As to expression, present only in a small number of hairs scattered over the surface of the funiculus.

The protein localises to the secreted. The sequence is that of General odorant-binding protein 84a (Obp84a) from Drosophila melanogaster (Fruit fly).